Here is a 321-residue protein sequence, read N- to C-terminus: Malate dehydrogenase (321 aa).

NAD(+) is bound by residues 10 to 15 (GSGMIG) and D34. Positions 83 and 89 each coordinate substrate. NAD(+) contacts are provided by residues N96 and 119 to 121 (ITN). Substrate-binding residues include N121 and R152. H176 functions as the Proton acceptor in the catalytic mechanism.

This sequence belongs to the LDH/MDH superfamily. MDH type 3 family.

The enzyme catalyses (S)-malate + NAD(+) = oxaloacetate + NADH + H(+). In terms of biological role, catalyzes the reversible oxidation of malate to oxaloacetate. This chain is Malate dehydrogenase, found in Chelativorans sp. (strain BNC1).